We begin with the raw amino-acid sequence, 310 residues long: Putative carbonic anhydrase 5 (310 aa).

The signal sequence occupies residues Met1–Cys20. An Alpha-carbonic anhydrase domain is found at His26–Pro280. His117, His119, and His142 together coordinate Zn(2+). Thr223–Thr224 serves as a coordination point for substrate.

Belongs to the alpha-carbonic anhydrase family.

Its subcellular location is the secreted. It carries out the reaction hydrogencarbonate + H(+) = CO2 + H2O. In terms of biological role, reversible hydration of carbon dioxide. This is Putative carbonic anhydrase 5 (cah-5) from Caenorhabditis elegans.